The sequence spans 87 residues: Large ribosomal subunit protein bL31B (87 aa).

This sequence belongs to the bacterial ribosomal protein bL31 family. Type B subfamily. Part of the 50S ribosomal subunit.

In Escherichia coli O9:H4 (strain HS), this protein is Large ribosomal subunit protein bL31B.